The sequence spans 930 residues: Protein translocase subunit SecA (930 aa).

Residues Gln-83, 101-105 (GEGKT), and Asp-491 each bind ATP.

It belongs to the SecA family. Monomer and homodimer. Part of the essential Sec protein translocation apparatus which comprises SecA, SecYEG and auxiliary proteins SecDF. Other proteins may also be involved.

It localises to the cell inner membrane. Its subcellular location is the cellular thylakoid membrane. The protein resides in the cytoplasm. It carries out the reaction ATP + H2O + cellular proteinSide 1 = ADP + phosphate + cellular proteinSide 2.. Functionally, part of the Sec protein translocase complex. Interacts with the SecYEG preprotein conducting channel. Has a central role in coupling the hydrolysis of ATP to the transfer of proteins into and across the cell membrane, serving as an ATP-driven molecular motor driving the stepwise translocation of polypeptide chains across the membrane. In terms of biological role, probably participates in protein translocation into and across both the cytoplasmic and thylakoid membranes in cyanobacterial cells. In Trichormus variabilis (strain ATCC 29413 / PCC 7937) (Anabaena variabilis), this protein is Protein translocase subunit SecA.